The sequence spans 456 residues: tRNA-2-methylthio-N(6)-dimethylallyladenosine synthase (456 aa).

In terms of domain architecture, MTTase N-terminal spans 9–126 (KKLYIKTHGC…LPEMMETKKS (118 aa)). [4Fe-4S] cluster contacts are provided by cysteine 18, cysteine 55, cysteine 89, cysteine 163, cysteine 167, and cysteine 170. In terms of domain architecture, Radical SAM core spans 149-381 (DADGVSAFVS…QDRITQQAMA (233 aa)). Positions 384 to 448 (RRMVGNTERI…PNSLRGSLIA (65 aa)) constitute a TRAM domain.

The protein belongs to the methylthiotransferase family. MiaB subfamily. In terms of assembly, monomer. [4Fe-4S] cluster is required as a cofactor.

The protein localises to the cytoplasm. It catalyses the reaction N(6)-dimethylallyladenosine(37) in tRNA + (sulfur carrier)-SH + AH2 + 2 S-adenosyl-L-methionine = 2-methylsulfanyl-N(6)-dimethylallyladenosine(37) in tRNA + (sulfur carrier)-H + 5'-deoxyadenosine + L-methionine + A + S-adenosyl-L-homocysteine + 2 H(+). In terms of biological role, catalyzes the methylthiolation of N6-(dimethylallyl)adenosine (i(6)A), leading to the formation of 2-methylthio-N6-(dimethylallyl)adenosine (ms(2)i(6)A) at position 37 in tRNAs that read codons beginning with uridine. This Cellvibrio japonicus (strain Ueda107) (Pseudomonas fluorescens subsp. cellulosa) protein is tRNA-2-methylthio-N(6)-dimethylallyladenosine synthase.